The chain runs to 307 residues: Cyclin-dependent kinase 5 activator 1 (307 aa).

Gly-2 carries N-myristoyl glycine lipidation. Residue Ser-8 is modified to Phosphoserine; by CDK5. The disordered stretch occupies residues Thr-97 to Ala-136. Residues Gln-100–Pro-110 are compositionally biased toward pro residues. Residues Ala-111–Ser-124 are compositionally biased toward low complexity. Thr-138 bears the Phosphothreonine; by CDK5 mark.

It belongs to the cyclin-dependent kinase 5 activator family. Heterodimer composed of a catalytic subunit CDK5 and a regulatory subunit CDK5R1 (p25) and macromolecular complex composed of at least CDK5, CDK5R1 (p35) and CDK5RAP1 or CDK5RAP2 or CDK5RAP3. Only the heterodimer shows kinase activity. Interacts with EPHA4 and NGEF; may mediate the activation of NGEF by EPHA4. Interacts with RASGRF2. The complex p35/CDK5 interacts with CLOCK. Post-translationally, the p35 form is proteolytically cleaved by calpain, giving rise to the p25 form. P35 has a 5 to 10 fold shorter half-life compared to p25. The conversion results in deregulation of the CDK5 kinase: p25/CDK5 kinase displays an increased and altered tau phosphorylation in comparison to the p35/CDK5 kinase in vivo. In terms of processing, myristoylated. A proper myristoylation signal is essential for the proper distribution of p35. Ubiquitinated, leading to its degradation: degradation of p35 by proteasome results in down-regulation of CDK5 activity. During this process, CDK5 phosphorylates p35 and induces its ubiquitination and subsequent degradation. Ubiquitinated by the CRL2(FEM1B) complex, which recognizes the -Gly-Leu-Asp-Arg C-degron at the C-terminus, leading to its degradation. Post-translationally, phosphorylation at Ser-8 and Thr-138 by CDK5 prevents calpain-mediated proteolysis. As to expression, brain and neuron specific.

The protein localises to the cell membrane. It is found in the cell projection. It localises to the neuron projection. Its subcellular location is the nucleus. The protein resides in the cytoplasm. The protein localises to the perinuclear region. It is found in the perikaryon. P35 is a neuron specific activator of CDK5. The complex p35/CDK5 is required for neurite outgrowth and cortical lamination. Involved in dendritic spine morphogenesis by mediating the EFNA1-EPHA4 signaling. Activator of TPKII. The complex p35/CDK5 participates in the regulation of the circadian clock by modulating the function of CLOCK protein: phosphorylates CLOCK at 'Thr-451' and 'Thr-461' and regulates the transcriptional activity of the CLOCK-BMAL1 heterodimer in association with altered stability and subcellular distribution. This Homo sapiens (Human) protein is Cyclin-dependent kinase 5 activator 1 (CDK5R1).